The primary structure comprises 325 residues: RNA ligase 1 (325 aa).

It depends on Mg(2+) as a cofactor. The cofactor is Mn(2+). In terms of processing, AMPylates itself (auto-AMPylation).

The enzyme catalyses ATP + (ribonucleotide)n-3'-hydroxyl + 5'-phospho-(ribonucleotide)m = (ribonucleotide)n+m + AMP + diphosphate.. Functions as an RNA ligase, in vitro. The ligation reaction entails three nucleotidyl transfer steps. In the first step, the RNA ligase reacts with ATP in the absence of nucleic acid to form a covalent ligase-AMP intermediate and release pyrophosphate. In step 2, the ligase-AMP binds to the nucleic acid and transfers the adenylate to the 5'-PO4 terminus to form an adenylylated intermediate. In step 3, the RNA ligase directs the attack of the 3'-OH on the 5'-phosphoanhydride linkage, resulting in a repaired 3'-5' phosphodiester and release of AMP. Exhibits selectivity for single-stranded RNA substrates and may not have nick-sealing activity on double-stranded DNA-RNA hybrids. May play a role in maintaining RNA integrity under stress conditions, for example in response to reactive oxygen species (ROS). The protein is RNA ligase 1 of Pongo abelii (Sumatran orangutan).